The sequence spans 75 residues: Sec-independent protein translocase protein TatA (75 aa).

A helical transmembrane segment spans residues 1-21 (MGSFSIWHWLIVLVIVLLVFG). Positions 41 to 75 (KGMHDDDKPAGKLGDDSRSAEQAREAQAERDRDAR) are disordered.

Belongs to the TatA/E family. The Tat system comprises two distinct complexes: a TatABC complex, containing multiple copies of TatA, TatB and TatC subunits, and a separate TatA complex, containing only TatA subunits. Substrates initially bind to the TatABC complex, which probably triggers association of the separate TatA complex to form the active translocon.

Its subcellular location is the cell inner membrane. Its function is as follows. Part of the twin-arginine translocation (Tat) system that transports large folded proteins containing a characteristic twin-arginine motif in their signal peptide across membranes. TatA could form the protein-conducting channel of the Tat system. This chain is Sec-independent protein translocase protein TatA, found in Xanthomonas campestris pv. campestris (strain 8004).